We begin with the raw amino-acid sequence, 446 residues long: N-succinylarginine dihydrolase (446 aa).

Substrate-binding positions include 19-28 (AGLSFGNVAS), Asn-110, and 137-138 (HR). Glu-174 is an active-site residue. Arg-213 contributes to the substrate binding site. His-249 is an active-site residue. Substrate contacts are provided by Asp-251 and Asn-364. The active-site Nucleophile is the Cys-370.

It belongs to the succinylarginine dihydrolase family. Homodimer.

The enzyme catalyses N(2)-succinyl-L-arginine + 2 H2O + 2 H(+) = N(2)-succinyl-L-ornithine + 2 NH4(+) + CO2. The protein operates within amino-acid degradation; L-arginine degradation via AST pathway; L-glutamate and succinate from L-arginine: step 2/5. Functionally, catalyzes the hydrolysis of N(2)-succinylarginine into N(2)-succinylornithine, ammonia and CO(2). The sequence is that of N-succinylarginine dihydrolase from Burkholderia cenocepacia (strain ATCC BAA-245 / DSM 16553 / LMG 16656 / NCTC 13227 / J2315 / CF5610) (Burkholderia cepacia (strain J2315)).